We begin with the raw amino-acid sequence, 379 residues long: Alanine racemase (379 aa).

Catalysis depends on Lys-40, which acts as the Proton acceptor; specific for D-alanine. Lys-40 is modified (N6-(pyridoxal phosphate)lysine). Residue Arg-138 coordinates substrate. The active-site Proton acceptor; specific for L-alanine is the Tyr-267. Met-315 is a binding site for substrate.

The protein belongs to the alanine racemase family. Pyridoxal 5'-phosphate serves as cofactor.

It carries out the reaction L-alanine = D-alanine. It functions in the pathway amino-acid biosynthesis; D-alanine biosynthesis; D-alanine from L-alanine: step 1/1. Catalyzes the interconversion of L-alanine and D-alanine. May also act on other amino acids. This is Alanine racemase (alr) from Halothermothrix orenii (strain H 168 / OCM 544 / DSM 9562).